A 484-amino-acid polypeptide reads, in one-letter code: E-selectin (484 aa).

A signal peptide spans 1-22 (MIASQFLSALPLVLLLLRESGA). In terms of domain architecture, C-type lectin spans 23 to 140 (WSYSASTETM…CSKKKLALCY (118 aa)). At 23 to 429 (WSYSASTETM…CEAPAESKIP (407 aa)) the chain is on the extracellular side. 14 disulfide bridges follow: Cys-41/Cys-139, Cys-112/Cys-131, Cys-144/Cys-155, Cys-149/Cys-164, Cys-166/Cys-175, Cys-181/Cys-222, Cys-194/Cys-204, Cys-208/Cys-235, Cys-240/Cys-285, Cys-271/Cys-298, Cys-303/Cys-348, Cys-334/Cys-361, Cys-366/Cys-407, and Cys-393/Cys-420. Asn-61, Asn-65, and Asn-79 each carry an N-linked (GlcNAc...) asparagine glycan. Residues Glu-102, Asn-104, and Glu-110 each contribute to the Ca(2+) site. Residues 102-110 (EPNNKQSNE), 114-119 (EIYIKR), and 127-129 (NDE) contribute to the a carbohydrate site. Residues Asn-127 and Asp-128 each contribute to the Ca(2+) site. Positions 141–176 (TAACTPTSCSGHGECIETINSSTCQCYPGFRGLQCE) constitute an EGF-like domain. A glycan (N-linked (GlcNAc...) asparagine) is linked at Asn-160. 4 consecutive Sushi domains span residues 179 to 237 (VECD…TCKA), 251 to 300 (VSCN…VCKA), 301 to 363 (VKCP…SCQV), and 364 to 422 (VQCS…TCEA). N-linked (GlcNAc...) asparagine glycosylation occurs at Asn-201. Asn-254 carries an N-linked (GlcNAc...) asparagine glycan. 2 N-linked (GlcNAc...) asparagine glycosylation sites follow: Asn-376 and Asn-400. The chain crosses the membrane as a helical span at residues 430–451 (LAMGLAAGGVSFMTSASFLLWL). The Cytoplasmic portion of the chain corresponds to 452 to 484 (LKRLRKRAKKFVPSSSSECLQPNGSYQMPSDLI).

It belongs to the selectin/LECAM family. As to quaternary structure, interacts with SELPLG/PSGL1 and PODXL2 through the sialyl Lewis X epitope. SELPLG sulfation appears not to be required for this interaction.

The protein resides in the cell membrane. Its function is as follows. Cell-surface glycoprotein having a role in immunoadhesion. Mediates in the adhesion of blood neutrophils in cytokine-activated endothelium through interaction with SELPLG/PSGL1. May have a role in capillary morphogenesis. This Sus scrofa (Pig) protein is E-selectin (SELE).